The sequence spans 368 residues: Core histone macro-H2A.1 (368 aa).

The region spanning 2–117 (SSRGGKKKST…NIHPELLAKK (116 aa)) is the Histone H2A domain. Residues K7 and K9 each carry the N6-lactoyllysine; alternate modification. N6-methyllysine is present on K18. Residue K116 is modified to N6-acetyllysine; alternate. K116 is covalently cross-linked (Glycyl lysine isopeptide (Lys-Gly) (interchain with G-Cter in ubiquitin); alternate). K117 is covalently cross-linked (Glycyl lysine isopeptide (Lys-Gly) (interchain with G-Cter in ubiquitin)). At K123 the chain carries N6-acetyllysine; alternate. K123 carries the post-translational modification N6,N6-dimethyllysine; alternate. Residue K123 forms a Glycyl lysine isopeptide (Lys-Gly) (interchain with G-Cter in SUMO2); alternate linkage. Residues 128–179 (ITPPPAKKAKSPSQKKPVAKKTGGKKGARKSKKQGEVSKAASADSTTEGAPT) are disordered. Residue T129 is modified to Phosphothreonine. Residues 144-159 (PVAKKTGGKKGARKSK) show a composition bias toward basic residues. A Glycyl lysine isopeptide (Lys-Gly) (interchain with G-Cter in SUMO2) cross-link involves residue K166. Phosphoserine occurs at positions 169 and 172. The 184-residue stretch at 183–366 (TVLSTKSLFL…IYVQEMAKLD (184 aa)) folds into the Macro domain. A Glycyl lysine isopeptide (Lys-Gly) (interchain with G-Cter in SUMO2) cross-link involves residue K188. Positions 202, 203, 225, 274, 311, 312, 313, and 315 each coordinate a glycoprotein. K319 participates in a covalent cross-link: Glycyl lysine isopeptide (Lys-Gly) (interchain with G-Cter in SUMO2).

It belongs to the histone H2A family. The nucleosome is a histone octamer containing two molecules each of H2A, H2B, H3 and H4 assembled in one H3-H4 heterotetramer and two H2A-H2B heterodimers. Interacts with HDAC1 and HDAC2. Interacts with SPOP. Part of a complex consisting of MACROH2A1, CUL3 and SPOP. In terms of assembly, interacts with PARP1. In terms of processing, monoubiquitinated at either Lys-116 or Lys-117. May also be polyubiquitinated. Ubiquitination is mediated by the CUL3/SPOP E3 complex and does not promote proteasomal degradation. Instead, it is required for enrichment in inactive X chromosome chromatin. In terms of tissue distribution, present only in liver and brain (at protein level). As to expression, present in brain, thymus, testis, liver and kidney (at protein level).

Its subcellular location is the nucleus. It is found in the chromosome. In terms of biological role, variant histone H2A which replaces conventional H2A in a subset of nucleosomes where it represses transcription. Nucleosomes wrap and compact DNA into chromatin, limiting DNA accessibility to the cellular machineries which require DNA as a template. Histones thereby play a central role in transcription regulation, DNA repair, DNA replication and chromosomal stability. DNA accessibility is regulated via a complex set of post-translational modifications of histones, also called histone code, and nucleosome remodeling. Involved in stable X chromosome inactivation. Inhibits the binding of transcription factors, including NF-kappa-B, and interferes with the activity of remodeling SWI/SNF complexes. Inhibits histone acetylation by EP300 and recruits class I HDACs, which induces a hypoacetylated state of chromatin. Isoform that specifically binds poly-ADP-ribose and O-acetyl-ADP-ribose and plays a key role in NAD(+) metabolism. Able to bind to the ends of poly-ADP-ribose chains created by PARP1 and cap them. This prevents PARP1 from further addition of ADP-ribose and thus limits the consumption of nuclear NAD(+), allowing the cell to maintain proper NAD(+) levels in both the nucleus and the mitochondria to promote proper mitochondrial respiration. Increases the expression of genes involved in redox metabolism, including SOD3. Its function is as follows. In contrast to isoform 1, does not bind poly-ADP-ribose. Represses SOD3 gene expression. This Rattus norvegicus (Rat) protein is Core histone macro-H2A.1.